A 136-amino-acid polypeptide reads, in one-letter code: Peptide methionine sulfoxide reductase B5 (136 aa).

The region spanning 14–135 (DEEWRAVLSP…NSVSIKFTPA (122 aa)) is the MsrB domain. Zn(2+) is bound by residues C53, C56, C99, and C102. Cysteines 71 and 124 form a disulfide. C124 functions as the Nucleophile in the catalytic mechanism.

It belongs to the MsrB Met sulfoxide reductase family. It depends on Zn(2+) as a cofactor.

It is found in the cytoplasm. The protein localises to the cytosol. The enzyme catalyses L-methionyl-[protein] + [thioredoxin]-disulfide + H2O = L-methionyl-(R)-S-oxide-[protein] + [thioredoxin]-dithiol. In terms of biological role, catalyzes the reduction of methionine sulfoxide (MetSO) to methionine in proteins. Plays a protective role against oxidative stress by restoring activity to proteins that have been inactivated by methionine oxidation. MSRB family specifically reduces the MetSO R-enantiomer. This chain is Peptide methionine sulfoxide reductase B5 (MSRB5), found in Oryza sativa subsp. japonica (Rice).